The following is a 785-amino-acid chain: Terminal nucleotidyltransferase 4A (785 aa).

Residues 56 to 184 (AAGRAAPAAG…QFHPGRRKRE (129 aa)) are disordered. Residues 68-85 (GPAPAASSPPPAPGPAAL) show a composition bias toward pro residues. Composition is skewed to low complexity over residues 86–98 (PPAL…PAAD) and 106–145 (SPSL…AGSG). The Mg(2+) site is built by Asp-290 and Asp-292. 4 residues coordinate ATP: Gly-353, Lys-378, Ser-396, and Tyr-397. Residues 421–480 (NLGMLLVEFFELYGRNFNYLKTGIRIKEGGAYIAKEEIMKAMTSGYRPSMLCIEDPLLPG) enclose the PAP-associated domain. The ATP site is built by Asn-481 and Arg-485. A compositionally biased stretch (low complexity) spans 593-611 (PQLLSSGSSASSVSSLSGS). Disordered stretches follow at residues 593-625 (PQLL…TPSV) and 731-785 (KGSH…SLSR). Residues 757–774 (RGHHQYNRTGWRRKKHAH) show a composition bias toward basic residues.

This sequence belongs to the DNA polymerase type-B-like family. In terms of assembly, component of a nuclear TRAMP-like complex, an ATP-dependent exosome regulatory complex consisting of a helicase (MTREX), an oligadenylate polymerase (TENT4B or TENT4A), and a substrate specific RNA-binding factor (ZCCHC7 or ZCCHC8). Several TRAMP-like complexes exist with specific compositions and are associated with nuclear, or nucleolar RNA exosomes. Requires Mg(2+) as cofactor. It depends on Mn(2+) as a cofactor.

The protein localises to the cytoplasm. Its subcellular location is the nucleus. It localises to the nucleoplasm. The enzyme catalyses RNA(n) + ATP = RNA(n)-3'-adenine ribonucleotide + diphosphate. Terminal nucleotidyltransferase that catalyzes preferentially the transfer of ATP and GTP on RNA 3' poly(A) tail creating a heterogeneous 3' poly(A) tail leading to mRNAs stabilization by protecting mRNAs from active deadenylation. Also functions as a catalytic subunit of a TRAMP-like complex which has a poly(A) RNA polymerase activity and is involved in a post-transcriptional quality control mechanism. Polyadenylation with short oligo(A) tails is required for the degradative activity of the exosome on several of its nuclear RNA substrates. Has no terminal uridylyltransferase activity, and does not play a role in replication-dependent histone mRNA degradation via uridylation. In Mus musculus (Mouse), this protein is Terminal nucleotidyltransferase 4A.